Consider the following 224-residue polypeptide: Holliday junction branch migration complex subunit RuvA (224 aa).

A domain I region spans residues 1–64 (MIGKVAGILD…EDLLQLFGFP (64 aa)). A domain II region spans residues 65-143 (TMIEKEWHRL…ALMAMGGGTA (79 aa)). A disordered region spans residues 141–185 (GTAALAPSEPPEPQPGTSSGSRRKTRAPEPPRPSHTADALSALAN). Residues 144–170 (ALAPSEPPEPQPGTSSGSRRKTRAPEP) are flexible linker. The segment at 171 to 224 (PRPSHTADALSALANLGYQPTDAAQAVAQAAGESPDADTAALIRAALKLLAPKS) is domain III.

Belongs to the RuvA family. As to quaternary structure, homotetramer. Forms an RuvA(8)-RuvB(12)-Holliday junction (HJ) complex. HJ DNA is sandwiched between 2 RuvA tetramers; dsDNA enters through RuvA and exits via RuvB. An RuvB hexamer assembles on each DNA strand where it exits the tetramer. Each RuvB hexamer is contacted by two RuvA subunits (via domain III) on 2 adjacent RuvB subunits; this complex drives branch migration. In the full resolvosome a probable DNA-RuvA(4)-RuvB(12)-RuvC(2) complex forms which resolves the HJ.

The protein resides in the cytoplasm. Functionally, the RuvA-RuvB-RuvC complex processes Holliday junction (HJ) DNA during genetic recombination and DNA repair, while the RuvA-RuvB complex plays an important role in the rescue of blocked DNA replication forks via replication fork reversal (RFR). RuvA specifically binds to HJ cruciform DNA, conferring on it an open structure. The RuvB hexamer acts as an ATP-dependent pump, pulling dsDNA into and through the RuvAB complex. HJ branch migration allows RuvC to scan DNA until it finds its consensus sequence, where it cleaves and resolves the cruciform DNA. The chain is Holliday junction branch migration complex subunit RuvA from Cereibacter sphaeroides (strain KD131 / KCTC 12085) (Rhodobacter sphaeroides).